A 349-amino-acid polypeptide reads, in one-letter code: Probable dual-specificity RNA methyltransferase RlmN (349 aa).

Catalysis depends on Glu-94, which acts as the Proton acceptor. The Radical SAM core domain maps to 100-324 (YKTHTSICLS…NKNNVNTTIR (225 aa)). Cysteines 107 and 335 form a disulfide. [4Fe-4S] cluster-binding residues include Cys-114, Cys-118, and Cys-121. Residues 161-162 (GE), Ser-193, 216-218 (SLH), and Asn-292 contribute to the S-adenosyl-L-methionine site. The active-site S-methylcysteine intermediate is Cys-335.

Belongs to the radical SAM superfamily. RlmN family. It depends on [4Fe-4S] cluster as a cofactor.

It is found in the cytoplasm. It catalyses the reaction adenosine(2503) in 23S rRNA + 2 reduced [2Fe-2S]-[ferredoxin] + 2 S-adenosyl-L-methionine = 2-methyladenosine(2503) in 23S rRNA + 5'-deoxyadenosine + L-methionine + 2 oxidized [2Fe-2S]-[ferredoxin] + S-adenosyl-L-homocysteine. The enzyme catalyses adenosine(37) in tRNA + 2 reduced [2Fe-2S]-[ferredoxin] + 2 S-adenosyl-L-methionine = 2-methyladenosine(37) in tRNA + 5'-deoxyadenosine + L-methionine + 2 oxidized [2Fe-2S]-[ferredoxin] + S-adenosyl-L-homocysteine. Its function is as follows. Specifically methylates position 2 of adenine 2503 in 23S rRNA and position 2 of adenine 37 in tRNAs. This is Probable dual-specificity RNA methyltransferase RlmN from Finegoldia magna (strain ATCC 29328 / DSM 20472 / WAL 2508) (Peptostreptococcus magnus).